Here is a 591-residue protein sequence, read N- to C-terminus: uncharacterized protein (591 aa).

The span at 1–10 shows a compositional bias: gly residues; it reads MSIRGVGGNG. Disordered regions lie at residues 1–37, 110–135, 324–344, and 487–517; these read MSIR…KVED, RSSA…GYRE, EESG…AQGP, and GHYQ…TPPL. A compositionally biased stretch (polar residues) spans 11 to 32; the sequence is NSRIPSHNGDGSNRRSQNTKGN. The span at 110-132 shows a compositional bias: low complexity; sequence RSSATRAAESGSSSRTARGASSG. Basic and acidic residues predominate over residues 490-507; the sequence is QDPRASDYDLPRASDYDL.

It to C.muridarum TC_0268.

This is an uncharacterized protein from Chlamydia trachomatis serovar D (strain ATCC VR-885 / DSM 19411 / UW-3/Cx).